The following is a 156-amino-acid chain: Ribosomal RNA large subunit methyltransferase H (156 aa).

Residues leucine 73, glycine 104, and 123–128 each bind S-adenosyl-L-methionine; that span reads LSPLTL.

This sequence belongs to the RNA methyltransferase RlmH family. In terms of assembly, homodimer.

Its subcellular location is the cytoplasm. It catalyses the reaction pseudouridine(1915) in 23S rRNA + S-adenosyl-L-methionine = N(3)-methylpseudouridine(1915) in 23S rRNA + S-adenosyl-L-homocysteine + H(+). Specifically methylates the pseudouridine at position 1915 (m3Psi1915) in 23S rRNA. The polypeptide is Ribosomal RNA large subunit methyltransferase H (Pseudoalteromonas atlantica (strain T6c / ATCC BAA-1087)).